We begin with the raw amino-acid sequence, 849 residues long: Mechanosensitive ion channel protein 7 (849 aa).

A disordered region spans residues 1 to 49 (MEFRKPFKSHSSYKQIISTGDQNEKTKKKKKLANLDDGDIAKTQSSGSS). Over residues 9 to 21 (SHSSYKQIISTGD) the composition is skewed to polar residues. 6 consecutive transmembrane segments (helical) span residues 231–251 (AITLLQWMSLIALVVALVLSL), 274–294 (LVLICGRLVSGCGIRIIVFFI), 313–333 (TAVQNCLWLGLVLLAWHFLFD), 344–364 (VLLLMSKILVCFLLSTVLWLI), 606–626 (MISFLTAIVIIVIWLILLEIA), and 642–662 (AFMFGNSLKTVFESIIFLFII).

This sequence belongs to the MscS (TC 1.A.23) family.

It localises to the membrane. In terms of biological role, mechanosensitive channel that opens in response to stretch forces in the membrane lipid bilayer. The polypeptide is Mechanosensitive ion channel protein 7 (MSL7) (Arabidopsis thaliana (Mouse-ear cress)).